The chain runs to 185 residues: Large ribosomal subunit protein uL5 (185 aa).

Belongs to the universal ribosomal protein uL5 family. Part of the 50S ribosomal subunit; part of the 5S rRNA/L5/L18/L25 subcomplex. Contacts the 5S rRNA and the P site tRNA. Forms a bridge to the 30S subunit in the 70S ribosome.

Functionally, this is one of the proteins that bind and probably mediate the attachment of the 5S RNA into the large ribosomal subunit, where it forms part of the central protuberance. In the 70S ribosome it contacts protein S13 of the 30S subunit (bridge B1b), connecting the 2 subunits; this bridge is implicated in subunit movement. Contacts the P site tRNA; the 5S rRNA and some of its associated proteins might help stabilize positioning of ribosome-bound tRNAs. The protein is Large ribosomal subunit protein uL5 of Rhizobium etli (strain ATCC 51251 / DSM 11541 / JCM 21823 / NBRC 15573 / CFN 42).